A 282-amino-acid chain; its full sequence is ATP synthase gamma chain (282 aa).

Belongs to the ATPase gamma chain family. In terms of assembly, F-type ATPases have 2 components, CF(1) - the catalytic core - and CF(0) - the membrane proton channel. CF(1) has five subunits: alpha(3), beta(3), gamma(1), delta(1), epsilon(1). CF(0) has three main subunits: a, b and c. In this bacterium the a and b subunits are transcribed but do not seem to be translated, thus the ATP synthase consists of the alpha, beta, gamma, delta, epsilon and c subunits.

It localises to the cell membrane. In terms of biological role, produces ATP from ADP in the presence of a proton gradient across the membrane. The gamma chain is believed to be important in regulating ATPase activity and the flow of protons through the CF(0) complex. The sequence is that of ATP synthase gamma chain from Moorella thermoacetica (strain ATCC 39073 / JCM 9320).